The sequence spans 173 residues: Crossover junction endodeoxyribonuclease RuvC (173 aa).

Active-site residues include aspartate 8, glutamate 69, and aspartate 141. 3 residues coordinate Mg(2+): aspartate 8, glutamate 69, and aspartate 141.

Belongs to the RuvC family. In terms of assembly, homodimer which binds Holliday junction (HJ) DNA. The HJ becomes 2-fold symmetrical on binding to RuvC with unstacked arms; it has a different conformation from HJ DNA in complex with RuvA. In the full resolvosome a probable DNA-RuvA(4)-RuvB(12)-RuvC(2) complex forms which resolves the HJ. Mg(2+) serves as cofactor.

It is found in the cytoplasm. The catalysed reaction is Endonucleolytic cleavage at a junction such as a reciprocal single-stranded crossover between two homologous DNA duplexes (Holliday junction).. Its function is as follows. The RuvA-RuvB-RuvC complex processes Holliday junction (HJ) DNA during genetic recombination and DNA repair. Endonuclease that resolves HJ intermediates. Cleaves cruciform DNA by making single-stranded nicks across the HJ at symmetrical positions within the homologous arms, yielding a 5'-phosphate and a 3'-hydroxyl group; requires a central core of homology in the junction. The consensus cleavage sequence is 5'-(A/T)TT(C/G)-3'. Cleavage occurs on the 3'-side of the TT dinucleotide at the point of strand exchange. HJ branch migration catalyzed by RuvA-RuvB allows RuvC to scan DNA until it finds its consensus sequence, where it cleaves and resolves the cruciform DNA. The protein is Crossover junction endodeoxyribonuclease RuvC of Xylella fastidiosa (strain 9a5c).